Consider the following 80-residue polypeptide: Beta-toxin KAaH2 (80 aa).

Residues 1 to 22 (MMKLMLFSIIVILFSLIGSIHG) form the signal peptide. The LCN-type CS-alpha/beta domain maps to 25–80 (VPGNYPLDSSDDTYLCAPLGENPSCIQICRKHGVKYGYCYAFQCWCEYLEDKNVKI). 3 disulfide bridges follow: Cys40-Cys63, Cys49-Cys68, and Cys53-Cys70.

The protein belongs to the long (3 C-C) scorpion toxin superfamily. Sodium/Potassium channel inhibitor family. In terms of tissue distribution, expressed by the venom gland.

The protein localises to the secreted. Functionally, weakly inhibits the vertebrate potassium channel Kv1.1/KCNA1. This is Beta-toxin KAaH2 from Androctonus australis (Sahara scorpion).